Consider the following 319-residue polypeptide: NADH-quinone oxidoreductase subunit H 1 (319 aa).

8 consecutive transmembrane segments (helical) span residues 1 to 21 (MIGL…LLVV), 74 to 94 (FAYI…FGVI), 107 to 127 (VGVL…VLGA), 147 to 167 (LAYE…AGSL), 179 to 199 (VWFV…GVAA), 238 to 258 (VLLV…GPWL), 262 to 282 (IWFG…RATL), and 293 to 313 (FAWK…GIVV).

The protein belongs to the complex I subunit 1 family. NDH-1 is composed of 14 different subunits. Subunits NuoA, H, J, K, L, M, N constitute the membrane sector of the complex.

The protein localises to the cell inner membrane. It catalyses the reaction a quinone + NADH + 5 H(+)(in) = a quinol + NAD(+) + 4 H(+)(out). In terms of biological role, NDH-1 shuttles electrons from NADH, via FMN and iron-sulfur (Fe-S) centers, to quinones in the respiratory chain. The immediate electron acceptor for the enzyme in this species is believed to be ubiquinone. Couples the redox reaction to proton translocation (for every two electrons transferred, four hydrogen ions are translocated across the cytoplasmic membrane), and thus conserves the redox energy in a proton gradient. This subunit may bind ubiquinone. The polypeptide is NADH-quinone oxidoreductase subunit H 1 (Rhodopseudomonas palustris (strain BisB5)).